The following is a 362-amino-acid chain: Phosphoserine aminotransferase (362 aa).

Position 43 (Arg43) interacts with L-glutamate. Pyridoxal 5'-phosphate contacts are provided by residues 77–78, Trp103, Thr153, Asp173, and Gln196; that span reads AR. The residue at position 197 (Lys197) is an N6-(pyridoxal phosphate)lysine.

Belongs to the class-V pyridoxal-phosphate-dependent aminotransferase family. SerC subfamily. As to quaternary structure, homodimer. Pyridoxal 5'-phosphate serves as cofactor.

The protein resides in the cytoplasm. It carries out the reaction O-phospho-L-serine + 2-oxoglutarate = 3-phosphooxypyruvate + L-glutamate. The catalysed reaction is 4-(phosphooxy)-L-threonine + 2-oxoglutarate = (R)-3-hydroxy-2-oxo-4-phosphooxybutanoate + L-glutamate. Its pathway is amino-acid biosynthesis; L-serine biosynthesis; L-serine from 3-phospho-D-glycerate: step 2/3. The protein operates within cofactor biosynthesis; pyridoxine 5'-phosphate biosynthesis; pyridoxine 5'-phosphate from D-erythrose 4-phosphate: step 3/5. Functionally, catalyzes the reversible conversion of 3-phosphohydroxypyruvate to phosphoserine and of 3-hydroxy-2-oxo-4-phosphonooxybutanoate to phosphohydroxythreonine. This chain is Phosphoserine aminotransferase, found in Legionella pneumophila subsp. pneumophila (strain Philadelphia 1 / ATCC 33152 / DSM 7513).